The primary structure comprises 263 residues: UPF0739 protein C1orf74 homolog (263 aa).

Belongs to the UPF0739 family.

This chain is UPF0739 protein C1orf74 homolog, found in Xenopus tropicalis (Western clawed frog).